A 760-amino-acid chain; its full sequence is Xaa-Pro dipeptidyl-peptidase (760 aa).

Catalysis depends on charge relay system residues serine 349, aspartate 469, and histidine 499.

It belongs to the peptidase S15 family. As to quaternary structure, homodimer.

It is found in the cytoplasm. It catalyses the reaction Hydrolyzes Xaa-Pro-|- bonds to release unblocked, N-terminal dipeptides from substrates including Ala-Pro-|-p-nitroanilide and (sequentially) Tyr-Pro-|-Phe-Pro-|-Gly-Pro-|-Ile.. Its function is as follows. Removes N-terminal dipeptides sequentially from polypeptides having unsubstituted N-termini provided that the penultimate residue is proline. In Streptococcus pyogenes serotype M6 (strain ATCC BAA-946 / MGAS10394), this protein is Xaa-Pro dipeptidyl-peptidase.